Here is a 311-residue protein sequence, read N- to C-terminus: 2-methoxy-6-polyprenyl-1,4-benzoquinol methylase, mitochondrial (311 aa).

A mitochondrion-targeting transit peptide spans 1–29 (MAAGLCPGRALLSRRGGALWALLGTARGR). Residues Thr-100, Asp-155, and 183–184 (NA) each bind S-adenosyl-L-methionine.

This sequence belongs to the class I-like SAM-binding methyltransferase superfamily. MenG/UbiE family. Component of a multi-subunit COQ enzyme complex, composed of at least COQ3, COQ4, COQ5, COQ6, COQ7 and COQ9.

It is found in the mitochondrion inner membrane. It carries out the reaction a 2-methoxy-6-(all-trans-polyprenyl)benzene-1,4-diol + S-adenosyl-L-methionine = a 5-methoxy-2-methyl-3-(all-trans-polyprenyl)benzene-1,4-diol + S-adenosyl-L-homocysteine + H(+). It participates in cofactor biosynthesis; ubiquinone biosynthesis. Methyltransferase required for the conversion of 2-polyprenyl-6-methoxy-1,4-benzoquinol (DDMQH2) to 2-polyprenyl-3-methyl-6-methoxy-1,4-benzoquinol (DMQH2). The sequence is that of 2-methoxy-6-polyprenyl-1,4-benzoquinol methylase, mitochondrial from Gallus gallus (Chicken).